The sequence spans 273 residues: NADPH-dependent 7-cyano-7-deazaguanine reductase (273 aa).

80–82 (VES) contacts substrate. 82–83 (SK) contacts NADPH. C180 functions as the Thioimide intermediate in the catalytic mechanism. The active-site Proton donor is the D187. Substrate is bound at residue 219–220 (HE). 248–249 (RG) lines the NADPH pocket.

This sequence belongs to the GTP cyclohydrolase I family. QueF type 2 subfamily. In terms of assembly, homodimer.

It is found in the cytoplasm. It catalyses the reaction 7-aminomethyl-7-carbaguanine + 2 NADP(+) = 7-cyano-7-deazaguanine + 2 NADPH + 3 H(+). It participates in tRNA modification; tRNA-queuosine biosynthesis. Its function is as follows. Catalyzes the NADPH-dependent reduction of 7-cyano-7-deazaguanine (preQ0) to 7-aminomethyl-7-deazaguanine (preQ1). The chain is NADPH-dependent 7-cyano-7-deazaguanine reductase from Bordetella bronchiseptica (strain ATCC BAA-588 / NCTC 13252 / RB50) (Alcaligenes bronchisepticus).